The sequence spans 634 residues: Probable potassium transport system protein Kup 2 (634 aa).

12 consecutive transmembrane segments (helical) span residues 15–35, 55–75, 101–121, 142–162, 173–193, 208–228, 252–272, 303–323, 351–371, 381–401, 408–428, and 435–455; these read LTLG…LYAF, VLSL…VIFL, WVAV…DAII, GMSQ…LFMF, LFGP…LWHI, AVTF…AVFL, WLSF…ALAL, LVIL…TGAY, IYMP…VLGF, YGIA…LIAW, PVWT…FFGA, and EGGW…FTWL.

The protein belongs to the HAK/KUP transporter (TC 2.A.72) family.

Its subcellular location is the cell inner membrane. It carries out the reaction K(+)(in) + H(+)(in) = K(+)(out) + H(+)(out). In terms of biological role, transport of potassium into the cell. Likely operates as a K(+):H(+) symporter. This is Probable potassium transport system protein Kup 2 from Novosphingobium aromaticivorans (strain ATCC 700278 / DSM 12444 / CCUG 56034 / CIP 105152 / NBRC 16084 / F199).